We begin with the raw amino-acid sequence, 312 residues long: Malate dehydrogenase (312 aa).

NAD(+) contacts are provided by residues 12–17 (GAGFTG) and aspartate 36. Arginine 87 and arginine 93 together coordinate substrate. NAD(+) is bound by residues asparagine 100 and 123-125 (LTN). Position 125 (asparagine 125) interacts with substrate. At serine 149 the chain carries Phosphoserine. Arginine 156 lines the substrate pocket. The active-site Proton acceptor is histidine 180.

This sequence belongs to the LDH/MDH superfamily. MDH type 3 family.

It carries out the reaction (S)-malate + NAD(+) = oxaloacetate + NADH + H(+). Catalyzes the reversible oxidation of malate to oxaloacetate. The sequence is that of Malate dehydrogenase from Bacillus pumilus (strain SAFR-032).